We begin with the raw amino-acid sequence, 98 residues long: Large ribosomal subunit protein uL23 (98 aa).

This sequence belongs to the universal ribosomal protein uL23 family. As to quaternary structure, part of the 50S ribosomal subunit. Contacts protein L29, and trigger factor when it is bound to the ribosome.

Its function is as follows. One of the early assembly proteins it binds 23S rRNA. One of the proteins that surrounds the polypeptide exit tunnel on the outside of the ribosome. Forms the main docking site for trigger factor binding to the ribosome. The protein is Large ribosomal subunit protein uL23 of Streptococcus gordonii (strain Challis / ATCC 35105 / BCRC 15272 / CH1 / DL1 / V288).